A 1250-amino-acid polypeptide reads, in one-letter code: Myosin-1 (1250 aa).

Positions 1–43 are disordered; the sequence is MGHSRRPAGGEKKSRGFGRSKAAADVGDGRQTGGKPQVKKATF. The 680-residue stretch at 51 to 730 folds into the Myosin motor domain; the sequence is IGVSDLTLLS…TLFALEAMRD (680 aa). 144 to 151 lines the ATP pocket; it reads GESGAGKT. Ser-372 is modified (phosphoserine). An actin-binding region spans residues 419-501; it reads SIGILDIYGF…PGVFAALNDA (83 aa). 2 IQ domains span residues 734 to 754 and 755 to 780; these read HNMA…RTEC and AIRI…QGHQ. A TH1 domain is found at 788-978; sequence RRRMSLLGSR…TIHTGPGEPA (191 aa). Disordered regions lie at residues 962–1079 and 1126–1250; these read DDSY…PKKP and WTPE…DDDW. Over residues 1021–1035 the composition is skewed to pro residues; the sequence is AAQPLPRATPQPAAP. A compositionally biased stretch (low complexity) spans 1036–1051; that stretch reads QPAARAVPQPVAAVAA. 2 stretches are compositionally biased toward pro residues: residues 1064–1077 and 1139–1151; these read APPP…PAPK and TPKP…PPAA. One can recognise an SH3 domain in the interval 1076-1137; it reads PKKPTAKVLY…PEAYLEEQVA (62 aa). Over residues 1152–1170 the composition is skewed to low complexity; the sequence is PRSTPAPATNGAAAAAKAK. Positions 1201 to 1222 are enriched in polar residues; it reads VSMNSHDSSGGSGRGTPNSMSN. Residues 1223–1232 are compositionally biased toward low complexity; the sequence is ASLAGGLAEA.

Belongs to the TRAFAC class myosin-kinesin ATPase superfamily. Myosin family. Post-translationally, phosphorylation of the TEDS site (Ser-372) is required for the polarization of the actin cytoskeleton. Phosphorylation probably activates the myosin-I ATPase activity.

The protein resides in the cytoplasm. It is found in the cytoskeleton. The protein localises to the actin patch. Functionally, type-I myosin implicated in the organization of the actin cytoskeleton. Required for proper actin cytoskeleton polarization. At the cell cortex, assembles in patch-like structures together with proteins from the actin-polymerizing machinery and promotes actin assembly. Functions as actin nucleation-promoting factor (NPF) for the Arp2/3 complex. Plays an important role in polarized growth, spore germination, hyphal morphogenesis, and septal wall formation. In Neosartorya fischeri (strain ATCC 1020 / DSM 3700 / CBS 544.65 / FGSC A1164 / JCM 1740 / NRRL 181 / WB 181) (Aspergillus fischerianus), this protein is Myosin-1 (myoA).